Reading from the N-terminus, the 402-residue chain is Propionate kinase (402 aa).

Residues Asn11 and Lys18 each coordinate ATP. Asn11 provides a ligand contact to Mg(2+). Arg86 is a binding site for substrate. Residue Asp143 is the Proton donor/acceptor of the active site. ATP contacts are provided by residues His175, His203–Gly207, Asp278–Arg280, and Gly326–Asn330.

It belongs to the acetokinase family. TdcD subfamily. As to quaternary structure, homodimer. Mg(2+) serves as cofactor.

The catalysed reaction is propanoate + ATP = propanoyl phosphate + ADP. It participates in amino-acid degradation; L-threonine degradation via propanoate pathway; propanoate from L-threonine: step 4/4. In terms of biological role, catalyzes the conversion of propionyl phosphate and ADP to propionate and ATP. The polypeptide is Propionate kinase (Citrobacter koseri (strain ATCC BAA-895 / CDC 4225-83 / SGSC4696)).